A 366-amino-acid chain; its full sequence is tRNA-specific 2-thiouridylase MnmA (366 aa).

ATP-binding positions include 12 to 19 (GMSGGVDS) and Met38. Positions 98-100 (NPD) are interaction with target base in tRNA. Cys103 acts as the Nucleophile in catalysis. A disulfide bond links Cys103 and Cys200. Gly128 serves as a coordination point for ATP. Residues 150–152 (KDQ) form an interaction with tRNA region. The Cysteine persulfide intermediate role is filled by Cys200. An interaction with tRNA region spans residues 312-313 (RY).

It belongs to the MnmA/TRMU family.

The protein localises to the cytoplasm. It catalyses the reaction S-sulfanyl-L-cysteinyl-[protein] + uridine(34) in tRNA + AH2 + ATP = 2-thiouridine(34) in tRNA + L-cysteinyl-[protein] + A + AMP + diphosphate + H(+). Catalyzes the 2-thiolation of uridine at the wobble position (U34) of tRNA, leading to the formation of s(2)U34. This Pseudoalteromonas translucida (strain TAC 125) protein is tRNA-specific 2-thiouridylase MnmA.